Here is a 608-residue protein sequence, read N- to C-terminus: RAS guanyl-releasing protein 2 (608 aa).

Positions threonine 4–threonine 126 constitute an N-terminal Ras-GEF domain. Residues serine 116, serine 117, and serine 147 each carry the phosphoserine modification. In terms of domain architecture, Ras-GEF spans glutamate 154–arginine 387. The segment at leucine 382–leucine 407 is disordered. EF-hand domains are found at residues histidine 426–leucine 461 and alanine 463–methionine 490. 10 residues coordinate Ca(2+): aspartate 439, aspartate 441, aspartate 443, histidine 445, glutamate 450, aspartate 468, asparagine 470, aspartate 472, cysteine 474, and glutamate 479. Residues valine 498–cysteine 548 form a Phorbol-ester/DAG-type zinc finger. Residues serine 554 and serine 575 each carry the phosphoserine modification. Residues serine 556–isoleucine 591 form a disordered region.

Belongs to the RASGRP family. Forms a signaling complex with RAP1 and BRAF. Interacts with RAP1. Interacts with F-actin.

It is found in the cytoplasm. The protein resides in the cytosol. The protein localises to the cell membrane. Its subcellular location is the synapse. It localises to the synaptosome. It is found in the cell projection. The protein resides in the ruffle membrane. Its function is as follows. Functions as a calcium- and DAG-regulated nucleotide exchange factor specifically activating Rap through the exchange of bound GDP for GTP. May also activate other GTPases such as RRAS, RRAS2, NRAS, KRAS but not HRAS. Functions in aggregation of platelets and adhesion of T-lymphocytes and neutrophils probably through inside-out integrin activation. May function in the muscarinic acetylcholine receptor M1/CHRM1 signaling pathway. The protein is RAS guanyl-releasing protein 2 (RASGRP2) of Bos taurus (Bovine).